Here is a 68-residue protein sequence, read N- to C-terminus: DNA-directed RNA polymerase subunit omega (68 aa).

The protein belongs to the RNA polymerase subunit omega family. The RNAP catalytic core consists of 2 alpha, 1 beta, 1 beta' and 1 omega subunit. When a sigma factor is associated with the core the holoenzyme is formed, which can initiate transcription.

The catalysed reaction is RNA(n) + a ribonucleoside 5'-triphosphate = RNA(n+1) + diphosphate. Its function is as follows. Promotes RNA polymerase assembly. Latches the N- and C-terminal regions of the beta' subunit thereby facilitating its interaction with the beta and alpha subunits. This chain is DNA-directed RNA polymerase subunit omega, found in Neisseria meningitidis serogroup C (strain 053442).